Consider the following 464-residue polypeptide: Dihydrolipoyl dehydrogenase (464 aa).

Residues 33–41 (EPKYWGGVC), Lys50, and Gly113 each bind FAD. Cysteines 41 and 46 form a disulfide. NAD(+) is bound by residues 178-182 (GAGAI), Glu201, and 266-269 (AIGF). Asp309 and Ala317 together coordinate FAD. His443 functions as the Proton acceptor in the catalytic mechanism.

The protein belongs to the class-I pyridine nucleotide-disulfide oxidoreductase family. In terms of assembly, homodimer. Part of the PDH complex, consisting of multiple copies of AceE (E1), DlaT (E2) and Lpd (E3), and of the BCKADH complex, consisting of multiple copies of BkdA/BkdB (E1), BkdC (E2) and Lpd (E3). FAD serves as cofactor.

The protein resides in the cytoplasm. The enzyme catalyses N(6)-[(R)-dihydrolipoyl]-L-lysyl-[protein] + NAD(+) = N(6)-[(R)-lipoyl]-L-lysyl-[protein] + NADH + H(+). In terms of biological role, lipoamide dehydrogenase is a component of the alpha-ketoacid dehydrogenase complexes. Catalyzes the reoxidation of dihydrolipoyl groups which are covalently attached to the lipoate acyltransferase components (E2) of the complexes. In Mycobacterium bovis (strain ATCC BAA-935 / AF2122/97), this protein is Dihydrolipoyl dehydrogenase (lpd).